Here is a 278-residue protein sequence, read N- to C-terminus: Alcohol dehydrogenase-related 31 kDa protein (278 aa).

Residue 11–34 participates in NAD(+) binding; sequence YVADCGGIALETSKVLMTKNIAKL. S139 serves as a coordination point for substrate. Y152 functions as the Proton acceptor in the catalytic mechanism.

This sequence belongs to the short-chain dehydrogenases/reductases (SDR) family.

This is Alcohol dehydrogenase-related 31 kDa protein (Adhr) from Drosophila pseudoobscura pseudoobscura (Fruit fly).